A 95-amino-acid polypeptide reads, in one-letter code: uncharacterized protein (95 aa).

Positions 1 to 21 (MKVLSISLIFFALLLTGCSQV) are cleaved as a signal peptide.

This is an uncharacterized protein from Archaeoglobus fulgidus (strain ATCC 49558 / DSM 4304 / JCM 9628 / NBRC 100126 / VC-16).